Reading from the N-terminus, the 241-residue chain is Small ribosomal subunit protein uS2 (241 aa).

It belongs to the universal ribosomal protein uS2 family.

The protein is Small ribosomal subunit protein uS2 of Yersinia enterocolitica serotype O:8 / biotype 1B (strain NCTC 13174 / 8081).